A 142-amino-acid chain; its full sequence is MVLSSADKNNVKACWGKIGSHAGEYGAEALERTFCSFPTTKTYFPHFDLSHGSAQVQAHGQKVADALTKAVAHINDLPNALSDLSDLHAYKLRVDPVNFKFLSHCLLVTLACHHPEEFTPAVHASLDKFFSAVSTVLTSKYR.

One can recognise a Globin domain in the interval 2–142; sequence VLSSADKNNV…VSTVLTSKYR (141 aa). At Ser4 the chain carries Phosphoserine. N6-succinyllysine occurs at positions 8 and 12. The residue at position 17 (Lys17) is an N6-acetyllysine; alternate. Position 17 is an N6-succinyllysine; alternate (Lys17). Tyr25 is modified (phosphotyrosine). Ser36 carries the post-translational modification Phosphoserine. Lys41 carries the post-translational modification N6-succinyllysine. Position 50 is a phosphoserine (Ser50). His59 lines the O2 pocket. Position 88 (His88) interacts with heme b. Ser103 is subject to Phosphoserine. Residue Thr109 is modified to Phosphothreonine. Ser125 carries the phosphoserine modification. Phosphothreonine is present on residues Thr135 and Thr138. The residue at position 139 (Ser139) is a Phosphoserine.

It belongs to the globin family. Heterotetramer of two alpha chains and two beta chains. In terms of tissue distribution, red blood cells.

Involved in oxygen transport from the lung to the various peripheral tissues. In terms of biological role, hemopressin acts as an antagonist peptide of the cannabinoid receptor CNR1. Hemopressin-binding efficiently blocks cannabinoid receptor CNR1 and subsequent signaling. This Panthera onca (Jaguar) protein is Hemoglobin subunit alpha (HBA).